Reading from the N-terminus, the 517-residue chain is Keratin-associated protein 16-1 (517 aa).

Tandem repeats lie at residues 73-77 (CCDPV), 93-97 (CCEAT), 128-132 (CCQPV), 153-157 (CCEPA), 168-172 (CCQPV), 198-202 (CCQPV), 208-212 (CCSAV), 228-232 (CCQPV), 248-252 (CCDPS), 283-287 (CCVQS), and 303-307 (CCVSS). The tract at residues 73–307 (CCDPVICEPS…CQEPSCCVSS (235 aa)) is 11 X 5 AA repeats of C-C-X(3). The interval 483–517 (VSEEAPCQPTEAKPISPTTREAAAAQPAASKPANC) is disordered. Residues 504–517 (AAAAQPAASKPANC) are compositionally biased toward low complexity.

This sequence belongs to the KRTAP type 16 family.

This is Keratin-associated protein 16-1 (KRTAP16-1) from Homo sapiens (Human).